The following is a 218-amino-acid chain: Pyridoxine/pyridoxamine 5'-phosphate oxidase (218 aa).

Substrate contacts are provided by residues 12-15 (RMSY) and arginine 70. FMN contacts are provided by residues 65 to 70 (RTVLLR), 80 to 81 (YT), lysine 87, and glutamine 109. Substrate-binding residues include tyrosine 127, arginine 131, and serine 135. FMN is bound by residues 145–146 (QS) and tryptophan 191. 197–199 (RLH) provides a ligand contact to substrate. Arginine 201 provides a ligand contact to FMN.

This sequence belongs to the pyridoxamine 5'-phosphate oxidase family. Homodimer. FMN is required as a cofactor.

It catalyses the reaction pyridoxamine 5'-phosphate + O2 + H2O = pyridoxal 5'-phosphate + H2O2 + NH4(+). It carries out the reaction pyridoxine 5'-phosphate + O2 = pyridoxal 5'-phosphate + H2O2. It functions in the pathway cofactor metabolism; pyridoxal 5'-phosphate salvage; pyridoxal 5'-phosphate from pyridoxamine 5'-phosphate: step 1/1. Its pathway is cofactor metabolism; pyridoxal 5'-phosphate salvage; pyridoxal 5'-phosphate from pyridoxine 5'-phosphate: step 1/1. Functionally, catalyzes the oxidation of either pyridoxine 5'-phosphate (PNP) or pyridoxamine 5'-phosphate (PMP) into pyridoxal 5'-phosphate (PLP). The sequence is that of Pyridoxine/pyridoxamine 5'-phosphate oxidase from Acinetobacter baylyi (strain ATCC 33305 / BD413 / ADP1).